Consider the following 1019-residue polypeptide: Protein HIRA (1019 aa).

7 WD repeats span residues 11 to 53 (HNGK…KEED), 68 to 107 (NHLACVNCVRWSNNGVYLASGGDDKLIMVWKRAAYIGPST), 129 to 168 (SHSGDVMDVAWSPHDAWLASCSVDNTVVIWNAVKFPEILA), 172 to 211 (GHSGLVKGLTWDPVGKYIASQADDRSLKVWRTMDWQLETS), 220 to 263 (GGTT…TNMD), 266 to 322 (GHRK…PLVV), and 326 to 367 (LFDK…DPLS). The interaction with RBBP4 stretch occupies residues 23–443 (PDGTKFATGG…ASMVNGESLE (421 aa)). 2 stretches are compositionally biased toward low complexity: residues 406–415 (QRQQQQQAEQ) and 544–561 (ATSVSTAPPASSSSVLTT). Disordered stretches follow at residues 406–433 (QRQQQQQAEQKNASIREASGAATTAPKV), 513–561 (ANSL…VLTT), and 599–633 (LKDQNLIKDNKPKDILESSSDSEEKIPAAKPLSAP). The tract at residues 444 to 1019 (DIRKNLLKKQ…TEYQEQLDIL (576 aa)) is interaction with HDAC1. Basic and acidic residues predominate over residues 599–625 (LKDQNLIKDNKPKDILESSSDSEEKIP). The interaction with HDAC2 stretch occupies residues 960–1019 (RLRELCKDLLGPVHYSRGSQWESTVMGLRKRELLKELLPVIGQNLFQRLFTEYQEQLDIL).

Belongs to the WD repeat HIR1 family. Interacts with ASF1, HDAC1, HDAC2 and RBBP4.

The protein resides in the nucleus. Cooperates with ASF1A to promote replication-independent chromatin assembly. May regulate the transcription of a variety of genes controlling cell growth. The sequence is that of Protein HIRA (HIRA) from Gallus gallus (Chicken).